Consider the following 680-residue polypeptide: DNA ligase (680 aa).

NAD(+) is bound by residues 32–36, 81–82, and E115; these read DAVYD and SL. Residue K117 is the N6-AMP-lysine intermediate of the active site. NAD(+) contacts are provided by R138, E175, K291, and K315. Positions 409, 412, 427, and 432 each coordinate Zn(2+). The region spanning 600–680 is the BRCT domain; it reads ASEQHLKGLT…RLQAMLKDSP (81 aa).

This sequence belongs to the NAD-dependent DNA ligase family. LigA subfamily. Mg(2+) serves as cofactor. Requires Mn(2+) as cofactor.

The catalysed reaction is NAD(+) + (deoxyribonucleotide)n-3'-hydroxyl + 5'-phospho-(deoxyribonucleotide)m = (deoxyribonucleotide)n+m + AMP + beta-nicotinamide D-nucleotide.. DNA ligase that catalyzes the formation of phosphodiester linkages between 5'-phosphoryl and 3'-hydroxyl groups in double-stranded DNA using NAD as a coenzyme and as the energy source for the reaction. It is essential for DNA replication and repair of damaged DNA. This chain is DNA ligase, found in Synechococcus sp. (strain CC9902).